The primary structure comprises 820 residues: Leucine--tRNA ligase (820 aa).

A 'HIGH' region motif is present at residues 42–52 (PYPSGDLHMGH). A 'KMSKS' region motif is present at residues 576–580 (KMSKS). An ATP-binding site is contributed by Lys-579.

Belongs to the class-I aminoacyl-tRNA synthetase family.

It is found in the cytoplasm. It carries out the reaction tRNA(Leu) + L-leucine + ATP = L-leucyl-tRNA(Leu) + AMP + diphosphate. The chain is Leucine--tRNA ligase from Coxiella burnetii (strain Dugway 5J108-111).